Consider the following 168-residue polypeptide: S-ribosylhomocysteine lyase (168 aa).

Fe cation contacts are provided by histidine 54, histidine 58, and cysteine 128.

Belongs to the LuxS family. In terms of assembly, homodimer. It depends on Fe cation as a cofactor.

The enzyme catalyses S-(5-deoxy-D-ribos-5-yl)-L-homocysteine = (S)-4,5-dihydroxypentane-2,3-dione + L-homocysteine. Its function is as follows. Involved in the synthesis of autoinducer 2 (AI-2) which is secreted by bacteria and is used to communicate both the cell density and the metabolic potential of the environment. The regulation of gene expression in response to changes in cell density is called quorum sensing. Catalyzes the transformation of S-ribosylhomocysteine (RHC) to homocysteine (HC) and 4,5-dihydroxy-2,3-pentadione (DPD). The chain is S-ribosylhomocysteine lyase from Neisseria gonorrhoeae (strain ATCC 700825 / FA 1090).